The following is a 327-amino-acid chain: Urokinase plasminogen activator surface receptor (327 aa).

The first 23 residues, 1–23 (MGLPRRLLLLLLLATTCVPASQG), serve as a signal peptide directing secretion. UPAR/Ly6 domains lie at 24–117 (LQCM…GRYL), 117–212 (LECA…PPNG), and 213–298 (FQCY…SPTG). 3 disulfides stabilise this stretch: Cys26-Cys47, Cys29-Cys35, and Cys40-Cys68. Residue Asn32 is glycosylated (N-linked (GlcNAc...) asparagine). Asn75 carries N-linked (GlcNAc...) asparagine glycosylation. 11 cysteine pairs are disulfide-bonded: Cys94-Cys99, Cys119-Cys146, Cys122-Cys129, Cys139-Cys168, Cys174-Cys191, Cys192-Cys197, Cys215-Cys243, Cys218-Cys226, Cys236-Cys262, Cys268-Cys287, and Cys288-Cys293. N-linked (GlcNAc...) asparagine glycosylation is found at Asn183, Asn193, Asn221, Asn254, and Asn282. Gly298 is lipidated: GPI-anchor amidated glycine. Residues 299-327 (GAPRPGPAQLSLIASLLLTLGLWGVLLWT) constitute a propeptide, removed in mature form.

Monomer. Interacts (via the UPAR/Ly6 domains) with SRPX2. Interacts with MRC2. Interacts with SORL1 (via N-terminal ectodomain); this interaction decreases PLAUR internalization. The ternary complex composed of PLAUR-PLAU-SERPINE1 also interacts with SORL1. Interacts with CD82; this interaction prevents PLAUR from binding to its high affinity ligand PLAU. Expressed in angiogenic endothelial cells (at protein level).

The protein resides in the cell membrane. Its subcellular location is the secreted. Acts as a receptor for urokinase plasminogen activator. Plays a role in localizing and promoting plasmin formation. Mediates the proteolysis-independent signal transduction activation effects of U-PA. The polypeptide is Urokinase plasminogen activator surface receptor (Plaur) (Mus musculus (Mouse)).